The chain runs to 352 residues: Holliday junction branch migration complex subunit RuvB (352 aa).

The interval 1-181 (MTDRIVGAAK…FGIPVRLHFY (181 aa)) is large ATPase domain (RuvB-L). Residues Leu-20, Arg-21, Gly-62, Lys-65, Thr-66, Thr-67, 128–130 (EDF), Arg-171, Tyr-181, and Arg-218 contribute to the ATP site. Thr-66 is a binding site for Mg(2+). The tract at residues 182–252 (EVAELEGIVR…AADKALQRLE (71 aa)) is small ATPAse domain (RuvB-S). Residues 255–352 (ELGLDALDHR…FDGDEENGSA (98 aa)) are head domain (RuvB-H). Arg-291, Arg-310, and Arg-315 together coordinate DNA.

Belongs to the RuvB family. In terms of assembly, homohexamer. Forms an RuvA(8)-RuvB(12)-Holliday junction (HJ) complex. HJ DNA is sandwiched between 2 RuvA tetramers; dsDNA enters through RuvA and exits via RuvB. An RuvB hexamer assembles on each DNA strand where it exits the tetramer. Each RuvB hexamer is contacted by two RuvA subunits (via domain III) on 2 adjacent RuvB subunits; this complex drives branch migration. In the full resolvosome a probable DNA-RuvA(4)-RuvB(12)-RuvC(2) complex forms which resolves the HJ.

Its subcellular location is the cytoplasm. It catalyses the reaction ATP + H2O = ADP + phosphate + H(+). The RuvA-RuvB-RuvC complex processes Holliday junction (HJ) DNA during genetic recombination and DNA repair, while the RuvA-RuvB complex plays an important role in the rescue of blocked DNA replication forks via replication fork reversal (RFR). RuvA specifically binds to HJ cruciform DNA, conferring on it an open structure. The RuvB hexamer acts as an ATP-dependent pump, pulling dsDNA into and through the RuvAB complex. RuvB forms 2 homohexamers on either side of HJ DNA bound by 1 or 2 RuvA tetramers; 4 subunits per hexamer contact DNA at a time. Coordinated motions by a converter formed by DNA-disengaged RuvB subunits stimulates ATP hydrolysis and nucleotide exchange. Immobilization of the converter enables RuvB to convert the ATP-contained energy into a lever motion, pulling 2 nucleotides of DNA out of the RuvA tetramer per ATP hydrolyzed, thus driving DNA branch migration. The RuvB motors rotate together with the DNA substrate, which together with the progressing nucleotide cycle form the mechanistic basis for DNA recombination by continuous HJ branch migration. Branch migration allows RuvC to scan DNA until it finds its consensus sequence, where it cleaves and resolves cruciform DNA. This Parvibaculum lavamentivorans (strain DS-1 / DSM 13023 / NCIMB 13966) protein is Holliday junction branch migration complex subunit RuvB.